Consider the following 545-residue polypeptide: Threonine--tRNA ligase catalytic subunit (545 aa).

Positions 139–433 are catalytic; that stretch reads DHRLIGEKLD…LLEHFKGKLP (295 aa). Residues Cys-231, His-282, and His-410 each contribute to the Zn(2+) site.

It belongs to the class-II aminoacyl-tRNA synthetase family. In terms of assembly, homodimer. Probably interacts with its editing subunit. Zn(2+) serves as cofactor.

It localises to the cytoplasm. It catalyses the reaction tRNA(Thr) + L-threonine + ATP = L-threonyl-tRNA(Thr) + AMP + diphosphate + H(+). Its function is as follows. Catalyzes the attachment of threonine to tRNA(Thr) in a two-step reaction: L-threonine is first activated by ATP to form Thr-AMP and then transferred to the acceptor end of tRNA(Thr). Also activates L-serine and transfers it to tRNA(Thr) but cannot deacylate incorrectly charged amino acid; unlike most archaea the editing function is found in a freestanding protein. This is Threonine--tRNA ligase catalytic subunit from Saccharolobus islandicus (strain Y.G.57.14 / Yellowstone #1) (Sulfolobus islandicus).